The chain runs to 382 residues: Processive diacylglycerol beta-glucosyltransferase (382 aa).

It belongs to the glycosyltransferase 28 family. UgtP subfamily.

The protein localises to the cell membrane. The catalysed reaction is a 1,2-diacyl-3-O-(beta-D-glucopyranosyl)-sn-glycerol + UDP-alpha-D-glucose = a 1,2-diacyl-3-O-(beta-D-Glc-(1-&gt;6)-beta-D-Glc)-sn-glycerol + UDP + H(+). It carries out the reaction a 1,2-diacyl-3-O-(beta-D-Glc-(1-&gt;6)-beta-D-Glc)-sn-glycerol + UDP-alpha-D-glucose = a 1,2-diacyl-3-O-(beta-D-Glc-(1-&gt;6)-beta-D-Glc-(1-&gt;6)-beta-D-Glc)-sn-glycerol + UDP + H(+). The enzyme catalyses a 1,2-diacyl-sn-glycerol + UDP-alpha-D-glucose = a 1,2-diacyl-3-O-(beta-D-glucopyranosyl)-sn-glycerol + UDP + H(+). It participates in glycolipid metabolism; diglucosyl-diacylglycerol biosynthesis. Functionally, processive glucosyltransferase involved in the biosynthesis of both the bilayer- and non-bilayer-forming membrane glucolipids. Is able to successively transfer up to three glucosyl residues to diacylglycerol (DAG), thereby catalyzing the formation of beta-monoglucosyl-DAG (3-O-(beta-D-glucopyranosyl)-1,2-diacyl-sn-glycerol), beta-diglucosyl-DAG (3-O-(beta-D-glucopyranosyl-beta-(1-&gt;6)-D-glucopyranosyl)-1,2-diacyl-sn-glycerol) and beta-triglucosyl-DAG (3-O-(beta-D-glucopyranosyl-beta-(1-&gt;6)-D-glucopyranosyl-beta-(1-&gt;6)-D-glucopyranosyl)-1,2-diacyl-sn-glycerol). Beta-diglucosyl-DAG is the predominant glycolipid found in Bacillales and is also used as a membrane anchor for lipoteichoic acid (LTA). Also seems to be able to form beta-tetraglucosyl-DAG, although this glycolipid has not been found in B.subtilis membrane. UgtP can only use UDP-glucose as sugar donor. This is Processive diacylglycerol beta-glucosyltransferase from Bacillus subtilis (strain 168).